Reading from the N-terminus, the 316-residue chain is tRNA dimethylallyltransferase (316 aa).

Residue 17-24 (GPTASGKT) participates in ATP binding. 19–24 (TASGKT) provides a ligand contact to substrate. Interaction with substrate tRNA regions lie at residues 42 to 45 (DSAL), 166 to 170 (QRLSR), 247 to 252 (RCVGYR), and 280 to 287 (KRQITWLR).

The protein belongs to the IPP transferase family. In terms of assembly, monomer. Mg(2+) is required as a cofactor.

The enzyme catalyses adenosine(37) in tRNA + dimethylallyl diphosphate = N(6)-dimethylallyladenosine(37) in tRNA + diphosphate. In terms of biological role, catalyzes the transfer of a dimethylallyl group onto the adenine at position 37 in tRNAs that read codons beginning with uridine, leading to the formation of N6-(dimethylallyl)adenosine (i(6)A). This Cronobacter sakazakii (strain ATCC BAA-894) (Enterobacter sakazakii) protein is tRNA dimethylallyltransferase.